We begin with the raw amino-acid sequence, 160 residues long: Protein-export protein SecB (160 aa).

Belongs to the SecB family. In terms of assembly, homotetramer, a dimer of dimers. One homotetramer interacts with 1 SecA dimer.

The protein localises to the cytoplasm. Functionally, one of the proteins required for the normal export of preproteins out of the cell cytoplasm. It is a molecular chaperone that binds to a subset of precursor proteins, maintaining them in a translocation-competent state. It also specifically binds to its receptor SecA. The sequence is that of Protein-export protein SecB from Rhizobium etli (strain ATCC 51251 / DSM 11541 / JCM 21823 / NBRC 15573 / CFN 42).